We begin with the raw amino-acid sequence, 678 residues long: Mitogen-activated protein kinase kinase kinase 7 (678 aa).

The Protein kinase domain occupies 19–271; the sequence is ITLREKVGHG…YIVGVMHEIV (253 aa). ATP contacts are provided by residues 25–33 and K46; that span reads VGHGSYGVV. D140 serves as the catalytic Proton acceptor. Disordered stretches follow at residues 296–322, 339–365, 431–455, and 616–647; these read DGTVAAQPDSLSSQEGELSPSSTQLTP, TTSSMTENTSSTSSDITPTNSGQLDNN, DLSPSESSSSSTNAKSDGRERLTVT, and QLAAGHHPQPHPHPHPNQLQHPHSHPPMHFLQ. 2 stretches are compositionally biased toward low complexity: residues 313–322 and 339–352; these read LSPSSTQLTP and TTSSMTENTSSTSS. Polar residues predominate over residues 353–364; sequence DITPTNSGQLDN.

Belongs to the protein kinase superfamily. STE Ser/Thr protein kinase family. MAP kinase kinase kinase subfamily. Mg(2+) serves as cofactor.

It catalyses the reaction L-seryl-[protein] + ATP = O-phospho-L-seryl-[protein] + ADP + H(+). The catalysed reaction is L-threonyl-[protein] + ATP = O-phospho-L-threonyl-[protein] + ADP + H(+). Its function is as follows. Component of a protein kinase signal transduction cascade. Mediator of TGF-beta signal transduction. Responsible for activation of the JNK MAPK pathway (basket, bsk and hemipterous, hep) in response to LPS. Component of the NF-kappa-B pathway; relish-mediated JNK inhibition involves proteasomal degradation of Tak1; certain targets of Relish that are induced during immune responses may facilitate destruction of Tak1 and switch off the JNK cascade. Participates in diverse roles such as control of cell shape and regulation of apoptosis. This is Mitogen-activated protein kinase kinase kinase 7 (Tak1) from Drosophila melanogaster (Fruit fly).